Consider the following 160-residue polypeptide: RNA pyrophosphohydrolase (160 aa).

A Nudix hydrolase domain is found at 10 to 154; it reads PYRKCVGVVL…KRDVYEQVFD (145 aa). A Nudix box motif is present at residues 44–65; sequence GGIEDGEDARTAALRELVEETG.

The protein belongs to the Nudix hydrolase family. RppH subfamily. It depends on a divalent metal cation as a cofactor.

Its function is as follows. Accelerates the degradation of transcripts by removing pyrophosphate from the 5'-end of triphosphorylated RNA, leading to a more labile monophosphorylated state that can stimulate subsequent ribonuclease cleavage. The sequence is that of RNA pyrophosphohydrolase from Dinoroseobacter shibae (strain DSM 16493 / NCIMB 14021 / DFL 12).